A 185-amino-acid polypeptide reads, in one-letter code: Ribosome-recycling factor (185 aa).

Belongs to the RRF family.

The protein resides in the cytoplasm. Responsible for the release of ribosomes from messenger RNA at the termination of protein biosynthesis. May increase the efficiency of translation by recycling ribosomes from one round of translation to another. This is Ribosome-recycling factor from Tolumonas auensis (strain DSM 9187 / NBRC 110442 / TA 4).